Consider the following 177-residue polypeptide: MSRIGLKVIEVPAGVTVTKDGENNITVKGPKGELTRHFNPIIEMHEEGNLINFTRSSDSDRAMHGTMRANLNNMILGVTEGFKKTLDLIGVGYRAQLKGKTLVLNVGYSHPVEMEAPEGVNVEVPSNTNIIISGISKQKVGQFAAEIRDVRPPEPYKGKGIRYTDEHVRRKEGKTGK.

It belongs to the universal ribosomal protein uL6 family. As to quaternary structure, part of the 50S ribosomal subunit.

Functionally, this protein binds to the 23S rRNA, and is important in its secondary structure. It is located near the subunit interface in the base of the L7/L12 stalk, and near the tRNA binding site of the peptidyltransferase center. The chain is Large ribosomal subunit protein uL6 from Latilactobacillus sakei subsp. sakei (strain 23K) (Lactobacillus sakei subsp. sakei).